The following is a 916-amino-acid chain: Oxoglutarate dehydrogenase (916 aa).

It belongs to the alpha-ketoglutarate dehydrogenase family. As to quaternary structure, homodimer. Part of the 2-oxoglutarate dehydrogenase (OGDH) complex composed of E1 (2-oxoglutarate dehydrogenase), E2 (dihydrolipoamide succinyltransferase) and E3 (dihydrolipoamide dehydrogenase); the complex contains multiple copies of the three enzymatic components (E1, E2 and E3). It depends on thiamine diphosphate as a cofactor.

It carries out the reaction N(6)-[(R)-lipoyl]-L-lysyl-[protein] + 2-oxoglutarate + H(+) = N(6)-[(R)-S(8)-succinyldihydrolipoyl]-L-lysyl-[protein] + CO2. In terms of biological role, E1 component of the 2-oxoglutarate dehydrogenase (OGDH) complex which catalyzes the decarboxylation of 2-oxoglutarate, the first step in the conversion of 2-oxoglutarate to succinyl-CoA and CO(2). The protein is Oxoglutarate dehydrogenase (sucA) of Buchnera aphidicola subsp. Baizongia pistaciae (strain Bp).